A 785-amino-acid chain; its full sequence is Endonuclease MutS2 (785 aa).

335-342 (GPNTGGKT) contacts ATP. In terms of domain architecture, Smr spans 710–785 (LDLRGERYEN…GSGVTIVELK (76 aa)).

Belongs to the DNA mismatch repair MutS family. MutS2 subfamily. In terms of assembly, homodimer. Binds to stalled ribosomes, contacting rRNA.

In terms of biological role, endonuclease that is involved in the suppression of homologous recombination and thus may have a key role in the control of bacterial genetic diversity. Its function is as follows. Acts as a ribosome collision sensor, splitting the ribosome into its 2 subunits. Detects stalled/collided 70S ribosomes which it binds and splits by an ATP-hydrolysis driven conformational change. Acts upstream of the ribosome quality control system (RQC), a ribosome-associated complex that mediates the extraction of incompletely synthesized nascent chains from stalled ribosomes and their subsequent degradation. Probably generates substrates for RQC. This is Endonuclease MutS2 from Bacillus velezensis (strain DSM 23117 / BGSC 10A6 / LMG 26770 / FZB42) (Bacillus amyloliquefaciens subsp. plantarum).